Consider the following 410-residue polypeptide: Protein king tubby 1 (410 aa).

Disordered stretches follow at residues Gln-44 to His-109 and Ile-121 to Val-159. The span at Met-47–Tyr-72 shows a compositional bias: polar residues. The span at Ser-132–Glu-143 shows a compositional bias: basic and acidic residues.

The protein belongs to the TUB family.

Its subcellular location is the cytoplasm. It is found in the nucleus. The polypeptide is Protein king tubby 1 (king-tubby1) (Aedes aegypti (Yellowfever mosquito)).